The primary structure comprises 154 residues: Urease accessory protein UreE (154 aa).

Residues 135-154 (YGHGRTFGHDHGHAHDHHHA) are disordered.

The protein belongs to the UreE family.

It is found in the cytoplasm. Its function is as follows. Involved in urease metallocenter assembly. Binds nickel. Probably functions as a nickel donor during metallocenter assembly. This Paracoccus denitrificans (strain Pd 1222) protein is Urease accessory protein UreE.